Consider the following 404-residue polypeptide: MQVSIACTEQNLRSRSSEDRLCGPRPGPGGGNGGPAGGGHGNPPGGGGSGPKARAALVPRPPAPAGALRESTGRGTGMKYRNLGKSGLRVSCLGLGTWVTFGSQISDETAEDVLTVAYEHGVNLFDTAEVYAAGKAERTLGNILKSKGWRRSSYVITTKIFWGGQAETERGLSRKHIIEGLRGSLERLQLGYVDIVFANRSDPNCPMEEIVRAMTYVINQGLALYWGTSRWGAAEIMEAYSMARQFNLIPPVCEQAEHHLFQREKVEMQLPELYHKIGVGSVTWYPLACGLITSKYDGRVPDTCRASIKGYQWLKDKVQSEDGKKQQAKVMDLLPVAHQLGCTVAQLAIAWCLRSEGVSSVLLGVSSAEQLIEHLGALQVLSQLTPQTVMEIDGLLGNKPHSKK.

Over residues 1–14 the composition is skewed to polar residues; it reads MQVSIACTEQNLRS. Positions 1 to 77 are disordered; the sequence is MQVSIACTEQ…LRESTGRGTG (77 aa). Residues 28-50 show a composition bias toward gly residues; sequence PGGGNGGPAGGGHGNPPGGGGSG. NADP(+)-binding residues include Thr-97, Trp-98, Gln-104, and Asp-126. The active-site Proton donor/acceptor is Tyr-131. 15 residues coordinate NADP(+): Asn-199, Ser-229, Arg-230, Gln-255, Trp-284, Pro-286, Leu-287, Ala-288, Cys-289, Lys-295, Arg-305, Gly-364, Ser-366, Gln-370, and Glu-373.

Belongs to the shaker potassium channel beta subunit family. As to quaternary structure, forms heteromultimeric complex with alpha subunits. Interacts with KCNA5 and KCNB2. In terms of tissue distribution, brain specific. Most prominent expression in cerebellum. Weaker signals detected in cortex, occipital lobe, frontal lobe and temporal lobe. Not detected in spinal cord, heart, lung, liver, kidney, pancreas, placenta and skeletal muscle.

It localises to the cytoplasm. Functionally, regulatory subunit of the voltage-gated potassium (Kv) channels composed of pore-forming and potassium-conducting alpha subunits and of regulatory beta subunit. The beta-3/KCNAB3 subunit may mediate closure of potassium channels. Increases inactivation of Kv1.5/KCNA5 alpha subunit-containing channels. May display nicotinamide adenine dinucleotide phosphate (NADPH)-dependent aldoketoreductase activity. The binding of oxidized and reduced NADP(H) cofactors may be required for the regulation of potassium channel activity. The polypeptide is Voltage-gated potassium channel subunit beta-3 (Homo sapiens (Human)).